Consider the following 716-residue polypeptide: Zinc finger CCCH domain-containing protein 30 (716 aa).

ANK repeat units follow at residues 90–120 (DYRT…DVNR) and 125–157 (DQTT…DLNL). Positions 201 to 231 (VTNVPNRSSSPCHSPTGENGGSGSGSPLGSP) are disordered. A compositionally biased stretch (polar residues) spans 203–213 (NVPNRSSSPCH). 2 C3H1-type zinc fingers span residues 306 to 328 (PCPD…HGVF) and 336 to 360 (QYRT…HTPE). Residues 521–562 (FQQQQQQQQSMLSPINTSFSSPKSVDHSLFSGGGRMSPRNVV) are disordered. Over residues 530–543 (SMLSPINTSFSSPK) the composition is skewed to polar residues. Position 566 is a phosphoserine (Ser-566). Over residues 583 to 594 (QQQQQQQQQQHQ) the composition is skewed to low complexity. Disordered regions lie at residues 583–638 (QQQQ…MSSE) and 667–692 (PAEA…PVEP). Positions 605–630 (TNSSPIVGSPVNNNTWSSKWGSSNGQ) are enriched in polar residues.

The chain is Zinc finger CCCH domain-containing protein 30 from Arabidopsis thaliana (Mouse-ear cress).